The following is a 544-amino-acid chain: Chaperonin GroEL 2 (544 aa).

ATP-binding positions include T29–P32, D86–T90, G413, and D495. Residues P525–Y544 are disordered. Over residues A533–Y544 the composition is skewed to gly residues.

It belongs to the chaperonin (HSP60) family. Forms a cylinder of 14 subunits composed of two heptameric rings stacked back-to-back. Interacts with the co-chaperonin GroES.

It is found in the cytoplasm. The enzyme catalyses ATP + H2O + a folded polypeptide = ADP + phosphate + an unfolded polypeptide.. In terms of biological role, together with its co-chaperonin GroES, plays an essential role in assisting protein folding. The GroEL-GroES system forms a nano-cage that allows encapsulation of the non-native substrate proteins and provides a physical environment optimized to promote and accelerate protein folding. The protein is Chaperonin GroEL 2 of Synechococcus sp. (strain JA-3-3Ab) (Cyanobacteria bacterium Yellowstone A-Prime).